Reading from the N-terminus, the 577-residue chain is Arginine--tRNA ligase (577 aa).

Positions 122–132 match the 'HIGH' region motif; it reads PNVAKEMHVGH.

This sequence belongs to the class-I aminoacyl-tRNA synthetase family. Monomer.

The protein resides in the cytoplasm. It catalyses the reaction tRNA(Arg) + L-arginine + ATP = L-arginyl-tRNA(Arg) + AMP + diphosphate. This chain is Arginine--tRNA ligase, found in Histophilus somni (strain 2336) (Haemophilus somnus).